Here is a 466-residue protein sequence, read N- to C-terminus: UDP-N-acetylmuramoylalanine--D-glutamate ligase (466 aa).

An ATP-binding site is contributed by 121–127; it reads GTNGKST.

Belongs to the MurCDEF family.

It is found in the cytoplasm. The enzyme catalyses UDP-N-acetyl-alpha-D-muramoyl-L-alanine + D-glutamate + ATP = UDP-N-acetyl-alpha-D-muramoyl-L-alanyl-D-glutamate + ADP + phosphate + H(+). The protein operates within cell wall biogenesis; peptidoglycan biosynthesis. Functionally, cell wall formation. Catalyzes the addition of glutamate to the nucleotide precursor UDP-N-acetylmuramoyl-L-alanine (UMA). This chain is UDP-N-acetylmuramoylalanine--D-glutamate ligase, found in Bradyrhizobium diazoefficiens (strain JCM 10833 / BCRC 13528 / IAM 13628 / NBRC 14792 / USDA 110).